Reading from the N-terminus, the 266-residue chain is Cytosolic Fe-S cluster assembly factor Nubp2 homolog (266 aa).

14–21 (GKGGVGKS) contributes to the ATP binding site. [4Fe-4S] cluster is bound by residues cysteine 188 and cysteine 191.

It belongs to the Mrp/NBP35 ATP-binding proteins family. Nubp2/CFD1 subfamily. Heterotetramer of 2 Nubp1 and 2 Nubp2 chains. Requires [4Fe-4S] cluster as cofactor.

The protein resides in the cytoplasm. Functionally, component of the cytosolic iron-sulfur (Fe/S) protein assembly (CIA) machinery. Required for maturation of extramitochondrial Fe-S proteins. The Nubp1-Nubp2 heterotetramer forms a Fe-S scaffold complex, mediating the de novo assembly of an Fe-S cluster and its transfer to target apoproteins. In Drosophila virilis (Fruit fly), this protein is Cytosolic Fe-S cluster assembly factor Nubp2 homolog.